A 366-amino-acid chain; its full sequence is Type 2 DNA topoisomerase 6 subunit A (366 aa).

Residues 7–146 enclose the Topo IIA-type catalytic domain; sequence SDETEARDQL…FHMRPEESGA (140 aa). The active-site O-(5'-phospho-DNA)-tyrosine intermediate is the tyrosine 101. Residues glutamate 199 and aspartate 251 each contribute to the Mg(2+) site.

The protein belongs to the TOP6A family. In terms of assembly, homodimer. Heterotetramer of two Top6A and two Top6B chains. It depends on Mg(2+) as a cofactor.

The catalysed reaction is ATP-dependent breakage, passage and rejoining of double-stranded DNA.. Its function is as follows. Relaxes both positive and negative superturns and exhibits a strong decatenase activity. This chain is Type 2 DNA topoisomerase 6 subunit A, found in Halobacterium salinarum (strain ATCC 700922 / JCM 11081 / NRC-1) (Halobacterium halobium).